Consider the following 499-residue polypeptide: ATP synthase subunit beta, chloroplastic (499 aa).

ATP is bound at residue 170–177 (GGAGVGKT).

It belongs to the ATPase alpha/beta chains family. As to quaternary structure, F-type ATPases have 2 components, CF(1) - the catalytic core - and CF(0) - the membrane proton channel. CF(1) has five subunits: alpha(3), beta(3), gamma(1), delta(1), epsilon(1). CF(0) has four main subunits: a(1), b(1), b'(1) and c(9-12).

It localises to the plastid. It is found in the chloroplast thylakoid membrane. It carries out the reaction ATP + H2O + 4 H(+)(in) = ADP + phosphate + 5 H(+)(out). Produces ATP from ADP in the presence of a proton gradient across the membrane. The catalytic sites are hosted primarily by the beta subunits. This is ATP synthase subunit beta, chloroplastic from Ipomoea purpurea (Common morning glory).